The following is a 448-amino-acid chain: Ribosomal protein uS12 methylthiotransferase RimO (448 aa).

Positions 16–126 (PKISFVSLGC…VVAAVHEAVP (111 aa)) constitute an MTTase N-terminal domain. Positions 25, 61, 90, 157, 161, and 164 each coordinate [4Fe-4S] cluster. Positions 143–380 (LTPRHYAYLK…METQNGIALR (238 aa)) constitute a Radical SAM core domain. The TRAM domain maps to 383–448 (RAKVGKRLPV…EAYDLYGSVA (66 aa)).

Belongs to the methylthiotransferase family. RimO subfamily. [4Fe-4S] cluster is required as a cofactor.

The protein resides in the cytoplasm. The catalysed reaction is L-aspartate(89)-[ribosomal protein uS12]-hydrogen + (sulfur carrier)-SH + AH2 + 2 S-adenosyl-L-methionine = 3-methylsulfanyl-L-aspartate(89)-[ribosomal protein uS12]-hydrogen + (sulfur carrier)-H + 5'-deoxyadenosine + L-methionine + A + S-adenosyl-L-homocysteine + 2 H(+). In terms of biological role, catalyzes the methylthiolation of an aspartic acid residue of ribosomal protein uS12. This Methylobacterium radiotolerans (strain ATCC 27329 / DSM 1819 / JCM 2831 / NBRC 15690 / NCIMB 10815 / 0-1) protein is Ribosomal protein uS12 methylthiotransferase RimO.